The chain runs to 471 residues: Probable ribonuclease FAU-1 (471 aa).

Belongs to the FAU-1 family.

In terms of biological role, probable RNase involved in rRNA stability through maturation and/or degradation of precursor rRNAs. Binds to RNA in loop regions with AU-rich sequences. The polypeptide is Probable ribonuclease FAU-1 (Thermococcus gammatolerans (strain DSM 15229 / JCM 11827 / EJ3)).